We begin with the raw amino-acid sequence, 312 residues long: Glutathione synthetase (312 aa).

The ATP-grasp domain occupies 125 to 309; that stretch reads KIFVTEFPDL…IAALFWDAVE (185 aa). Position 151–207 (151–207) interacts with ATP; that stretch reads RREFGDIILKPLYGNGGAGVFHLADGDRNLTSLLEMFGQLFREPFIAQRYLKDVRAG. Mg(2+) is bound by residues Glu280 and Asn282.

This sequence belongs to the prokaryotic GSH synthase family. Mg(2+) is required as a cofactor. The cofactor is Mn(2+).

The catalysed reaction is gamma-L-glutamyl-L-cysteine + glycine + ATP = glutathione + ADP + phosphate + H(+). It functions in the pathway sulfur metabolism; glutathione biosynthesis; glutathione from L-cysteine and L-glutamate: step 2/2. This chain is Glutathione synthetase, found in Brucella melitensis biotype 1 (strain ATCC 23456 / CCUG 17765 / NCTC 10094 / 16M).